The chain runs to 361 residues: Divinyl chlorophyll a/b light-harvesting protein PcbE (361 aa).

6 consecutive transmembrane segments (helical) span residues 27 to 47 (FIGS…ANTL), 88 to 108 (VAFV…AGLL), 149 to 169 (FILG…VEWA), 210 to 230 (VMGG…FHIA), 250 to 270 (AVLS…AFWC), and 315 to 335 (LSNV…WHAI).

Belongs to the PsbB/PsbC family. IsiA/Pcb subfamily. The antenna complex consists of divinyl chlorophylls (a and b) and divinyl chlorophyll a/b binding proteins and binds more divinyl chlorophyll b than does the antenna complex from high-light-adapted Prochlorococcus. The cofactor is divinyl chlorophyll a. Divinyl chlorophyll b serves as cofactor.

The protein localises to the cellular thylakoid membrane. The antenna complex functions as a light receptor, it captures and delivers excitation energy to photosystems II and I. The Prochlorales pcb genes are not related to higher plant LHCs. This chain is Divinyl chlorophyll a/b light-harvesting protein PcbE (pcbE), found in Prochlorococcus marinus (strain SARG / CCMP1375 / SS120).